The chain runs to 154 residues: Ribonuclease P protein component (154 aa).

The protein belongs to the RnpA family. Consists of a catalytic RNA component (M1 or rnpB) and a protein subunit.

The enzyme catalyses Endonucleolytic cleavage of RNA, removing 5'-extranucleotides from tRNA precursor.. RNaseP catalyzes the removal of the 5'-leader sequence from pre-tRNA to produce the mature 5'-terminus. It can also cleave other RNA substrates such as 4.5S RNA. The protein component plays an auxiliary but essential role in vivo by binding to the 5'-leader sequence and broadening the substrate specificity of the ribozyme. The sequence is that of Ribonuclease P protein component from Chlorobaculum tepidum (strain ATCC 49652 / DSM 12025 / NBRC 103806 / TLS) (Chlorobium tepidum).